A 452-amino-acid polypeptide reads, in one-letter code: Na(+)/H(+) antiporter NhaA (452 aa).

11 helical membrane-spanning segments follow: residues 27–47 (FSGI…NSAL), 67–87 (FIGM…FFLM), 108–128 (AFPA…YTLF), 137–157 (GFGI…LLLG), 166–186 (VFLV…IAIF), 194–214 (LWLL…KMGV), 216–236 (SLFP…NCGI), 314–334 (PWSA…VAIS), 343–363 (GVLP…ILGL), 381–401 (WIDI…SIFI), and 414–434 (VAKI…YFFI).

This sequence belongs to the NhaA Na(+)/H(+) (TC 2.A.33) antiporter family.

It is found in the cell inner membrane. It catalyses the reaction Na(+)(in) + 2 H(+)(out) = Na(+)(out) + 2 H(+)(in). Na(+)/H(+) antiporter that extrudes sodium in exchange for external protons. The protein is Na(+)/H(+) antiporter NhaA of Wolinella succinogenes (strain ATCC 29543 / DSM 1740 / CCUG 13145 / JCM 31913 / LMG 7466 / NCTC 11488 / FDC 602W) (Vibrio succinogenes).